Here is a 110-residue protein sequence, read N- to C-terminus: uncharacterized protein (110 aa).

Residues 18-34 (MFPLISTFTSIGLGVLM) form a helical membrane-spanning segment.

The protein localises to the membrane. This is an uncharacterized protein from Saccharomyces cerevisiae (strain ATCC 204508 / S288c) (Baker's yeast).